A 454-amino-acid polypeptide reads, in one-letter code: NEDD8-activating enzyme E1 catalytic subunit (454 aa).

The residue at position 2 (A2) is an N-acetylalanine. Residue 56–80 (GLGCELLKDLALSGFRNLEVIDMDR) coordinates ATP. C215 functions as the Glycyl thioester intermediate in the catalytic mechanism.

It belongs to the ubiquitin-activating E1 family. UBA3 subfamily. In terms of assembly, heterodimer of UBA3/ECR1 and AXR1. Interacts with NEDD8 and RCE1. Expressed in shoot, root and floral meristems, in vascular tissues of cotyledons and mature leaves, and in the stele of the root.

It localises to the nucleus. The catalysed reaction is ATP + [NEDD8 protein] + [E1 NEDD8-activating enzyme]-L-cysteine = AMP + diphosphate + [E1 NEDD8-activating enzyme]-S-[NEDD8 protein]-yl-L-cysteine.. Its pathway is protein modification; protein neddylation. Catalytic subunit of the dimeric ECR1-AXR1 E1 enzyme. E1 activates NEDD8/RUB1 by first adenylating its C-terminal glycine residue with ATP, thereafter linking this residue to the side chain of the catalytic cysteine, yielding a NEDD8-ECR1 thioester and free AMP. E1 finally transfers NEDD8 to the catalytic cysteine of RCE1. This is NEDD8-activating enzyme E1 catalytic subunit (ECR1) from Arabidopsis thaliana (Mouse-ear cress).